Consider the following 239-residue polypeptide: U-scoloptoxin(11)-Sm3a (239 aa).

The signal sequence occupies residues 1 to 16 (MINFLLLVLILSVLES).

It belongs to the scoloptoxin-11 family. Contains 9 disulfide bonds. Expressed by the venom gland.

The protein resides in the secreted. The sequence is that of U-scoloptoxin(11)-Sm3a from Scolopendra morsitans (Tanzanian blue ringleg centipede).